We begin with the raw amino-acid sequence, 140 residues long: MASKVDYQSGKKHGLQLKNQESELDSIAAEFAGELDEATLSKYKTQFMSYDINNSGDIDHYELQLLMEKINQPKTYLELKKMIEQVDSTGKGAINFRDFIKMMTGKTSSILQKILMFEEMGKKSEQPKGIPQKRSISDLP.

EF-hand domains follow at residues 38 to 73 (ATLSKYKTQFMSYDINNSGDIDHYELQLLMEKINQP) and 74 to 109 (KTYLELKKMIEQVDSTGKGAINFRDFIKMMTGKTSS). Ca(2+) is bound by residues Asp-51, Asn-53, Ser-55, Asp-57, and Glu-62.

The chain is Calcium-binding protein B (cbpB) from Dictyostelium discoideum (Social amoeba).